Here is a 309-residue protein sequence, read N- to C-terminus: Isopentenyl-diphosphate Delta-isomerase II (309 aa).

Lys-112 provides a ligand contact to substrate. Mg(2+) contacts are provided by His-116 and His-128. The region spanning 126–278 is the Nudix hydrolase domain; the sequence is LLHRAFSVFL…GLKLSPWFRL (153 aa). The substrate site is built by Arg-147 and Lys-151. Residue Cys-163 is part of the active site. Ser-164 serves as a coordination point for substrate. Positions 223 and 225 each coordinate Mg(2+). Glu-225 is an active-site residue.

Belongs to the IPP isomerase type 1 family. The cofactor is Mg(2+).

It carries out the reaction isopentenyl diphosphate = dimethylallyl diphosphate. It participates in isoprenoid biosynthesis; dimethylallyl diphosphate biosynthesis; dimethylallyl diphosphate from isopentenyl diphosphate: step 1/1. Its pathway is porphyrin-containing compound metabolism; chlorophyll biosynthesis. Catalyzes the 1,3-allylic rearrangement of the homoallylic substrate isopentenyl (IPP) to its highly electrophilic allylic isomer, dimethylallyl diphosphate (DMAPP). The sequence is that of Isopentenyl-diphosphate Delta-isomerase II (IPI2) from Camptotheca acuminata (Happy tree).